We begin with the raw amino-acid sequence, 280 residues long: Bifunctional protein FolD (280 aa).

Residues 166-168 and Ser191 contribute to the NADP(+) site; that span reads GRS.

This sequence belongs to the tetrahydrofolate dehydrogenase/cyclohydrolase family. In terms of assembly, homodimer.

It catalyses the reaction (6R)-5,10-methylene-5,6,7,8-tetrahydrofolate + NADP(+) = (6R)-5,10-methenyltetrahydrofolate + NADPH. The catalysed reaction is (6R)-5,10-methenyltetrahydrofolate + H2O = (6R)-10-formyltetrahydrofolate + H(+). It participates in one-carbon metabolism; tetrahydrofolate interconversion. Functionally, catalyzes the oxidation of 5,10-methylenetetrahydrofolate to 5,10-methenyltetrahydrofolate and then the hydrolysis of 5,10-methenyltetrahydrofolate to 10-formyltetrahydrofolate. This chain is Bifunctional protein FolD, found in Saccharophagus degradans (strain 2-40 / ATCC 43961 / DSM 17024).